Consider the following 376-residue polypeptide: Histidinol-phosphate aminotransferase 1 (376 aa).

Lysine 235 bears the N6-(pyridoxal phosphate)lysine mark.

This sequence belongs to the class-II pyridoxal-phosphate-dependent aminotransferase family. Histidinol-phosphate aminotransferase subfamily. Homodimer. It depends on pyridoxal 5'-phosphate as a cofactor.

It carries out the reaction L-histidinol phosphate + 2-oxoglutarate = 3-(imidazol-4-yl)-2-oxopropyl phosphate + L-glutamate. Its pathway is amino-acid biosynthesis; L-histidine biosynthesis; L-histidine from 5-phospho-alpha-D-ribose 1-diphosphate: step 7/9. The chain is Histidinol-phosphate aminotransferase 1 from Cupriavidus pinatubonensis (strain JMP 134 / LMG 1197) (Cupriavidus necator (strain JMP 134)).